The following is a 261-amino-acid chain: Protein LIKE COV 2 (261 aa).

Positions 1 to 38 (MAEGKEATTSSLSQGLTPHQDPDDAPKSPPNSPNSSTR) are disordered. Topologically, residues 1–56 (MAEGKEATTSSLSQGLTPHQDPDDAPKSPPNSPNSSTRKACYGVLQSWVSKKFMTG) are cytoplasmic. Over residues 7-17 (ATTSSLSQGLT) the composition is skewed to polar residues. The helical transmembrane segment at 57–77 (FVVLFPVAVTFLITWWFIQFV) threads the bilayer. The Extracellular segment spans residues 78–91 (DGFFSPIYENLGVD). Residues 92–112 (IFGLGFITSVLFTFFVGIFAS) traverse the membrane as a helical segment. Residues 113 to 261 (SWLGSTVFWL…HSLRVPLNRL (149 aa)) are Cytoplasmic-facing.

Belongs to the plant COV1 protein family.

It localises to the membrane. The polypeptide is Protein LIKE COV 2 (Arabidopsis thaliana (Mouse-ear cress)).